Here is a 434-residue protein sequence, read N- to C-terminus: Adenylosuccinate synthetase (434 aa).

GTP contacts are provided by residues 11 to 17 (GDEGKGK) and 39 to 41 (GHT). Asp-12 (proton acceptor) is an active-site residue. Mg(2+)-binding residues include Asp-12 and Gly-39. Residues 12 to 15 (DEGK), 37 to 40 (NAGH), Thr-134, Arg-148, Asn-230, Thr-245, and Arg-309 each bind IMP. The active-site Proton donor is the His-40. 305 to 311 (VTTGRKR) provides a ligand contact to substrate. Residues Arg-311, 337-339 (KLD), and 419-421 (GTG) contribute to the GTP site.

The protein belongs to the adenylosuccinate synthetase family. As to quaternary structure, homodimer. The cofactor is Mg(2+).

Its subcellular location is the cytoplasm. The catalysed reaction is IMP + L-aspartate + GTP = N(6)-(1,2-dicarboxyethyl)-AMP + GDP + phosphate + 2 H(+). The protein operates within purine metabolism; AMP biosynthesis via de novo pathway; AMP from IMP: step 1/2. Functionally, plays an important role in the de novo pathway and in the salvage pathway of purine nucleotide biosynthesis. Catalyzes the first committed step in the biosynthesis of AMP from IMP. This is Adenylosuccinate synthetase from Lachancea thermotolerans (strain ATCC 56472 / CBS 6340 / NRRL Y-8284) (Yeast).